Reading from the N-terminus, the 238-residue chain is UPF0758 protein Dtpsy_2777 (238 aa).

In terms of domain architecture, MPN spans 116–238 (VFDSPQAVQH…ALSMAEQGLV (123 aa)). Residues His-187, His-189, and Asp-200 each coordinate Zn(2+). The JAMM motif signature appears at 187-200 (HNHPSGSVQPSRAD).

The protein belongs to the UPF0758 family.

This Acidovorax ebreus (strain TPSY) (Diaphorobacter sp. (strain TPSY)) protein is UPF0758 protein Dtpsy_2777.